Consider the following 194-residue polypeptide: MITIGLTGGIGSGKSTVSSRLAELGAFIVDADLVAREIVEPGQPALAELADAFDGVLNPDGTLNRGELARQAFATPEATEKLNAITHPRIRARTEELFKQGRESGAQVLVYDMPLLIENGEVDKVDHVLVVDAPDELRIDRLVQHRGLDENDARRRIAAQIDRATRLNAADTVLDNSGTVEQLLEQVDGFWGGL.

The DPCK domain maps to 3 to 194 (TIGLTGGIGS…EQVDGFWGGL (192 aa)). 11–16 (GSGKST) is a binding site for ATP.

Belongs to the CoaE family.

It is found in the cytoplasm. It carries out the reaction 3'-dephospho-CoA + ATP = ADP + CoA + H(+). Its pathway is cofactor biosynthesis; coenzyme A biosynthesis; CoA from (R)-pantothenate: step 5/5. Functionally, catalyzes the phosphorylation of the 3'-hydroxyl group of dephosphocoenzyme A to form coenzyme A. The polypeptide is Dephospho-CoA kinase (Corynebacterium jeikeium (strain K411)).